Reading from the N-terminus, the 131-residue chain is Methylglyoxal synthase (131 aa).

The region spanning 1–131 (MKIALIAHDK…GDLDYRKFRK (131 aa)) is the MGS-like domain. Residues H8, K12, 34–37 (TGTT), and 54–55 (SG) each bind substrate. D60 (proton donor/acceptor) is an active-site residue. H87 contacts substrate.

This sequence belongs to the methylglyoxal synthase family.

It carries out the reaction dihydroxyacetone phosphate = methylglyoxal + phosphate. In terms of biological role, catalyzes the formation of methylglyoxal from dihydroxyacetone phosphate. In Bacillus cytotoxicus (strain DSM 22905 / CIP 110041 / 391-98 / NVH 391-98), this protein is Methylglyoxal synthase.